A 305-amino-acid polypeptide reads, in one-letter code: Putative S-adenosyl-L-methionine-dependent methyltransferase MAB_4607c (305 aa).

S-adenosyl-L-methionine is bound by residues aspartate 128 and 155–156 (DL).

Belongs to the UPF0677 family.

In terms of biological role, exhibits S-adenosyl-L-methionine-dependent methyltransferase activity. This chain is Putative S-adenosyl-L-methionine-dependent methyltransferase MAB_4607c, found in Mycobacteroides abscessus (strain ATCC 19977 / DSM 44196 / CCUG 20993 / CIP 104536 / JCM 13569 / NCTC 13031 / TMC 1543 / L948) (Mycobacterium abscessus).